Here is a 621-residue protein sequence, read N- to C-terminus: MLLLPSAAEGQGTAITHALTSASAVCQVEPVGRWFEAFVKRRNRNASTSFQELEDKKELSEESEDEELQLEEFPMLKTLDPKDWKNQDHYAVLGLGHVRYKATQRQIKAAHKTMVLKHHPDKRKAAGEPIKEGDNDYFTCITKAYEMLSDPVKRRAFNSVDPTFDNSVPSKSEAKENFFQVFSPVFERNSRWSNKKNVPKLGDMNSSFEDVDAFYSFWYNFDSWREFSYLDEEEKEKAECRDERKWIEKQNRATRAQRKKEEMNRIRTLVDNAYSCDPRIKKFKEEGKAKKEAEKRAKAEARRKEQEAKEKQRQAELEAVRLAKEKEEEEVRQQALLAKKEKEIQKKAIKKERQKLRNSCKNWNHFSDNEADRVKMMEEVEKLCDRLELASLQCLNEILASSTREVGKAALEKQIEEVNELMRKEKEEADARMRQASKNAEKSTGGSGSGSKNWSEDDLQLLIKAVNLFPAGTNSRWEVIANYMNIHSSSGVKRTAKDVIGKAKSLQKLDPHQKDDINKKAFDKFKKEHGVAPQADSAAPSERFEGPCIDSIPWTTEEQKLLEQALKTYPVNTPERWEKIAEAVPGRTKKDCMRRYKELVEMVKAKKAAQEQVLNASRARK.

Met1 is subject to N-acetylmethionine. Phosphoserine occurs at positions 47, 49, 60, and 63. The 74-residue stretch at 88-161 (DHYAVLGLGH…VKRRAFNSVD (74 aa)) folds into the J domain. Positions 160–250 (VDPTFDNSVP…RDERKWIEKQ (91 aa)) are ZRF1-UBD. Position 183 is a phosphoserine (Ser183). Disordered regions lie at residues 287–312 (GKAK…KEKQ) and 426–453 (KEEA…GSKN). 2 consecutive SANT domains span residues 449 to 511 (SGSK…KLDP) and 549 to 604 (IDSI…EMVK).

Component of ribosome-associated complex (RAC), a heterodimer composed of Hsp70/DnaK-type chaperone HSPA14 and Hsp40/DnaJ-type chaperone DNAJC2. Interacts (via ZRF1-UBD region) with ID1. Post-translationally, phosphorylated in M (mitotic) phase.

Its subcellular location is the nucleus. It is found in the cytoplasm. It localises to the cytosol. Acts both as a chaperone in the cytosol and as a chromatin regulator in the nucleus. When cytosolic, acts as a molecular chaperone: component of the ribosome-associated complex (RAC), a complex involved in folding or maintaining nascent polypeptides in a folding-competent state. In the RAC complex, stimulates the ATPase activity of the ribosome-associated pool of Hsp70-type chaperones HSPA14 that bind to the nascent polypeptide chain. When nuclear, mediates the switching from polycomb-repressed genes to an active state: specifically recruited at histone H2A ubiquitinated at 'Lys-119' (H2AK119ub), and promotes the displacement of the polycomb PRC1 complex from chromatin, thereby facilitating transcription activation. The chain is DnaJ homolog subfamily C member 2 (Dnajc2) from Rattus norvegicus (Rat).